The following is a 969-amino-acid chain: Liprin-beta-1 (969 aa).

The residue at position 37 (serine 37) is a Phosphoserine. At threonine 39 the chain carries Phosphothreonine. Serine 40 carries the post-translational modification Phosphoserine. Residues 99 to 310 (GDVYQERLAR…CLSRYRKMQD (212 aa)) are a coiled coil. Position 291 is an N6-acetyllysine (lysine 291). Disordered regions lie at residues 342–361 (DLER…RDLL), 381–407 (LLPP…FEEG), and 424–482 (GVST…RKAR). A compositionally biased stretch (low complexity) spans 346–358 (STSSTPGMGSPSR). A phosphoserine mark is found at serine 403 and serine 435. The segment covering 426-438 (STSSLQKSSSLGN) has biased composition (low complexity). Residues 439–452 (LKKEASDGTDKAPT) are compositionally biased toward basic and acidic residues. Lysine 440 is covalently cross-linked (Glycyl lysine isopeptide (Lys-Gly) (interchain with G-Cter in SUMO2)). The residue at position 500 (serine 500) is a Phosphoserine. The segment covering 518 to 529 (AGTSRSKGSQGT) has biased composition (polar residues). Residues 518 to 593 (AGTSRSKGSQ…PRLGWSRDLG (76 aa)) form a disordered region. Phosphoserine is present on serine 538. Residues 543-557 (KKSRGIMRLFGKLRR) are compositionally biased toward basic residues. A phosphoserine mark is found at serine 560 and serine 595. SAM domains follow at residues 606 to 670 (WTKE…LGSE) and 678 to 741 (LDFN…LRIN). Phosphoserine occurs at positions 753 and 757. One can recognise an SAM 3 domain in the interval 763–835 (VQQWTNHRVM…ATHFNLLIGA (73 aa)). 3 positions are modified to phosphoserine: serine 957, serine 959, and serine 961. Residue threonine 963 is modified to Phosphothreonine.

Belongs to the liprin family. Liprin-beta subfamily. Forms homodimers and heterodimers. Interacts with S100A4 in a Ca(2+)-dependent mode. Part of a cortical microtubule stabilization complex (CMSC) composed of KANK1, PPFIA1, PPFIBP1, ERC1/ELKS, PHLDB2/LL5beta, CLASPs, KIF21A and possibly additional interactors; within CMSCs KANK1 and PHLDB2/LL5beta seem to be the core components for recruiting microtubule-binding proteins KIF21A and CLASPs, whereas PPFIA1, PPFIBP1 and ERC1/ELKS serve as scaffolds for protein clustering. Interacts with KANK1 (via CC1 domain, residues 244-339).

It is found in the cytoplasm. It localises to the cell cortex. In terms of biological role, may regulate the disassembly of focal adhesions. Did not bind receptor-like tyrosine phosphatases type 2A. In Mus musculus (Mouse), this protein is Liprin-beta-1 (Ppfibp1).